A 209-amino-acid polypeptide reads, in one-letter code: Small ribosomal subunit protein mS23 (209 aa).

Belongs to the mitochondrion-specific ribosomal protein mS23 family. As to quaternary structure, component of the mitochondrial small ribosomal subunit.

It is found in the mitochondrion. This is Small ribosomal subunit protein mS23 (rsm25) from Sclerotinia sclerotiorum (strain ATCC 18683 / 1980 / Ss-1) (White mold).